Consider the following 140-residue polypeptide: Large-conductance mechanosensitive channel (140 aa).

2 consecutive transmembrane segments (helical) span residues 16-36 (VIDL…VTAL) and 84-104 (INTV…VKLI).

Belongs to the MscL family. As to quaternary structure, homopentamer.

It localises to the cell inner membrane. Functionally, channel that opens in response to stretch forces in the membrane lipid bilayer. May participate in the regulation of osmotic pressure changes within the cell. This chain is Large-conductance mechanosensitive channel, found in Xanthomonas oryzae pv. oryzae (strain PXO99A).